A 263-amino-acid chain; its full sequence is MTRIDDTFRRLRAEGKKAFVAYIMAGDPDLETSLAVMRGLPEAGVDIIELGMPFTDPMADGPTIQTAGQRALEGGQTLTRTLEMVRAFRAENAETPIVMMGYYNPIYARGVETFLAEATEAGIDGLIVVDLPPEEDAELCLPAQAAGLNFIRLATPTTDSRRLPKVLQNTSGFVYYVSITGITGAAAAQAVDVAPEVARIKAATDLPVIVGFGITTPEAAQDLAGIADGCVVGSAIVKLVGEGRPVAEVLDRVAALAAGAHAA.

Residues glutamate 49 and aspartate 60 each act as proton acceptor in the active site.

This sequence belongs to the TrpA family. Tetramer of two alpha and two beta chains.

The enzyme catalyses (1S,2R)-1-C-(indol-3-yl)glycerol 3-phosphate + L-serine = D-glyceraldehyde 3-phosphate + L-tryptophan + H2O. It participates in amino-acid biosynthesis; L-tryptophan biosynthesis; L-tryptophan from chorismate: step 5/5. Functionally, the alpha subunit is responsible for the aldol cleavage of indoleglycerol phosphate to indole and glyceraldehyde 3-phosphate. In Cereibacter sphaeroides (strain KD131 / KCTC 12085) (Rhodobacter sphaeroides), this protein is Tryptophan synthase alpha chain.